A 231-amino-acid chain; its full sequence is Probable methylthioribulose-1-phosphate dehydratase (231 aa).

Position 82 (Cys82) interacts with substrate. The Zn(2+) site is built by His100 and His102. Glu123 serves as the catalytic Proton donor/acceptor. A Zn(2+)-binding site is contributed by His181.

Belongs to the aldolase class II family. MtnB subfamily. It depends on Zn(2+) as a cofactor.

The protein localises to the cytoplasm. It catalyses the reaction 5-(methylsulfanyl)-D-ribulose 1-phosphate = 5-methylsulfanyl-2,3-dioxopentyl phosphate + H2O. Its pathway is amino-acid biosynthesis; L-methionine biosynthesis via salvage pathway; L-methionine from S-methyl-5-thio-alpha-D-ribose 1-phosphate: step 2/6. Functionally, catalyzes the dehydration of methylthioribulose-1-phosphate (MTRu-1-P) into 2,3-diketo-5-methylthiopentyl-1-phosphate (DK-MTP-1-P). The sequence is that of Probable methylthioribulose-1-phosphate dehydratase from Dictyostelium discoideum (Social amoeba).